Consider the following 469-residue polypeptide: tRNA modification GTPase MnmE (469 aa).

Residues R26, E88, and R127 each contribute to the (6S)-5-formyl-5,6,7,8-tetrahydrofolate site. The TrmE-type G domain maps to 222 to 390 (GLKVAIVGRP…LEDAILHLVQ (169 aa)). Position 232 (N232) interacts with K(+). GTP-binding positions include 232 to 237 (NVGKSS), 251 to 257 (TDLPGTT), 276 to 279 (DTAG), and 344 to 347 (NKAD). Mg(2+) is bound at residue S236. K(+) is bound by residues T251, L253, and T256. Residue T257 coordinates Mg(2+). Residue K469 participates in (6S)-5-formyl-5,6,7,8-tetrahydrofolate binding.

It belongs to the TRAFAC class TrmE-Era-EngA-EngB-Septin-like GTPase superfamily. TrmE GTPase family. As to quaternary structure, homodimer. Heterotetramer of two MnmE and two MnmG subunits. K(+) is required as a cofactor.

The protein resides in the cytoplasm. Functionally, exhibits a very high intrinsic GTPase hydrolysis rate. Involved in the addition of a carboxymethylaminomethyl (cmnm) group at the wobble position (U34) of certain tRNAs, forming tRNA-cmnm(5)s(2)U34. In Synechococcus elongatus, this protein is tRNA modification GTPase MnmE.